A 204-amino-acid chain; its full sequence is Probable UMP-CMP kinase 1 (204 aa).

31 to 36 provides a ligand contact to ATP; the sequence is GSGKGT. The interval 51-80 is NMP; it reads SAGDLLRAEIKSGSEFGAMIQSMIAEGRIV. A ribonucleoside 5'-phosphate contacts are provided by residues Arg-57, 78–80, and 105–108; these read RIV and GFPR. Position 112 (Asn-112) interacts with CMP. The tract at residues 143–151 is LID; it reads SRNQGREDD. ATP is bound at residue Arg-144. A ribonucleoside 5'-phosphate-binding residues include Arg-148 and Arg-159. ATP is bound at residue Lys-187.

It belongs to the adenylate kinase family. UMP-CMP kinase subfamily. As to quaternary structure, monomer. Mg(2+) is required as a cofactor.

The protein resides in the cytoplasm. It is found in the nucleus. It carries out the reaction CMP + ATP = CDP + ADP. The catalysed reaction is dCMP + ATP = dCDP + ADP. The enzyme catalyses UMP + ATP = UDP + ADP. In terms of biological role, catalyzes the phosphorylation of pyrimidine nucleoside monophosphates at the expense of ATP. Plays an important role in de novo pyrimidine nucleotide biosynthesis. Has preference for UMP and CMP as phosphate acceptors. This Arabidopsis thaliana (Mouse-ear cress) protein is Probable UMP-CMP kinase 1 (UMK1).